The sequence spans 454 residues: Metalloprotease MTH_856 (454 aa).

A disordered region spans residues 92–115 (QVGSGAPSVDKTMVRSSRPPSDVP).

It belongs to the peptidase U62 family.

In terms of biological role, probable metalloprotease. The polypeptide is Metalloprotease MTH_856 (Methanothermobacter thermautotrophicus (strain ATCC 29096 / DSM 1053 / JCM 10044 / NBRC 100330 / Delta H) (Methanobacterium thermoautotrophicum)).